The chain runs to 197 residues: Phospholipid hydroperoxide glutathione peroxidase (197 aa).

Ser-40 carries the phosphoserine modification. Sec-73 is a catalytic residue. Position 73 (Sec-73) is a non-standard amino acid, selenocysteine.

This sequence belongs to the glutathione peroxidase family. Monomer. Has a tendency to form higher mass oligomers. Interacts with FUNDC1; this interaction promotes GPX4 recruitment into mitochondria through TOM/TIM complex where it is degraded by mitophagy.

The protein localises to the mitochondrion. The protein resides in the cytoplasm. The enzyme catalyses a hydroperoxy polyunsaturated fatty acid + 2 glutathione = a hydroxy polyunsaturated fatty acid + glutathione disulfide + H2O. It catalyses the reaction 2 glutathione + H2O2 = glutathione disulfide + 2 H2O. It carries out the reaction tert-butyl hydroperoxide + 2 glutathione = tert-butanol + glutathione disulfide + H2O. The catalysed reaction is cumene hydroperoxide + 2 glutathione = 2-phenylpropan-2-ol + glutathione disulfide + H2O. The enzyme catalyses (9S)-hydroperoxy-(10E,12Z)-octadecadienoate + 2 glutathione = (9S)-hydroxy-(10E,12Z)-octadecadienoate + glutathione disulfide + H2O. It catalyses the reaction (13S)-hydroperoxy-(9Z,11E)-octadecadienoate + 2 glutathione = (13S)-hydroxy-(9Z,11E)-octadecadienoate + glutathione disulfide + H2O. It carries out the reaction (5S)-hydroperoxy-(6E,8Z,11Z,14Z)-eicosatetraenoate + 2 glutathione = (5S)-hydroxy-(6E,8Z,11Z,14Z)-eicosatetraenoate + glutathione disulfide + H2O. The catalysed reaction is (12R)-hydroperoxy-(5Z,8Z,10E,14Z)-eicosatetraenoate + 2 glutathione = (12R)-hydroxy-(5Z,8Z,10E,14Z)-eicosatetraenoate + glutathione disulfide + H2O. The enzyme catalyses (12S)-hydroperoxy-(5Z,8Z,10E,14Z)-eicosatetraenoate + 2 glutathione = (12S)-hydroxy-(5Z,8Z,10E,14Z)-eicosatetraenoate + glutathione disulfide + H2O. It catalyses the reaction (15S)-hydroperoxy-(5Z,8Z,11Z,13E)-eicosatetraenoate + 2 glutathione = (15S)-hydroxy-(5Z,8Z,11Z,13E)-eicosatetraenoate + glutathione disulfide + H2O. It carries out the reaction (5S)-hydroperoxy-(6E,8Z,11Z,14Z,17Z)-eicosapentaenoate + 2 glutathione = (5S)-hydroxy-(6E,8Z,11Z,14Z,17Z)-eicosapentaenoate + glutathione disulfide + H2O. The catalysed reaction is (12S)-hydroperoxy-(5Z,8Z,10E,14Z,17Z)-eicosapentaenoate + 2 glutathione = (12S)-hydroxy-(5Z,8Z,10E,14Z,17Z)-eicosapentaenoate + glutathione disulfide + H2O. The enzyme catalyses (15S)-hydroperoxy-(5Z,8Z,11Z,13E,17Z)-eicosapentaenoate + 2 glutathione = (15S)-hydroxy-(5Z,8Z,11Z,13E,17Z)-eicosapentaenoate + glutathione disulfide + H2O. It catalyses the reaction (15S)-hydroperoxy-(11Z,13E)-eicosadienoate + 2 glutathione = (15S)-hydroxy-(11Z,13E)-eicosadienoate + glutathione disulfide + H2O. It carries out the reaction (17S)-hydroperoxy-(4Z,7Z,10Z,13Z,15E,19Z)-docosahexaenoate + 2 glutathione = (17S)-hydroxy-(4Z,7Z,10Z,13Z,15E,19Z)-docosahexaenoate + glutathione disulfide + H2O. The catalysed reaction is a hydroperoxy-1,2-diacyl-glycero-3-phosphocholine + 2 glutathione = a hydroxy-1,2-diacyl-glycero-3-phosphocholine + glutathione disulfide + H2O. Its function is as follows. Essential antioxidant peroxidase that directly reduces phospholipid hydroperoxide even if they are incorporated in membranes and lipoproteins. Can also reduce fatty acid hydroperoxide, cholesterol hydroperoxide and thymine hydroperoxide. Plays a key role in protecting cells from oxidative damage by preventing membrane lipid peroxidation. Required to prevent cells from ferroptosis, a non-apoptotic cell death resulting from an iron-dependent accumulation of lipid reactive oxygen species. The presence of selenocysteine (Sec) versus Cys at the active site is essential for life: it provides resistance to overoxidation and prevents cells against ferroptosis. The presence of Sec at the active site is also essential for the survival of a specific type of parvalbumin-positive interneurons, thereby preventing against fatal epileptic seizures. May be required to protect cells from the toxicity of ingested lipid hydroperoxides. Required for normal sperm development and male fertility. Essential for maturation and survival of photoreceptor cells. Plays a role in a primary T-cell response to viral and parasitic infection by protecting T-cells from ferroptosis and by supporting T-cell expansion. Plays a role of glutathione peroxidase in platelets in the arachidonic acid metabolism. Reduces hydroperoxy ester lipids formed by a 15-lipoxygenase that may play a role as down-regulator of the cellular 15-lipoxygenase pathway. Can also reduce small soluble hydroperoxides such as H2O2, cumene hydroperoxide and tert-butyl hydroperoxide. The protein is Phospholipid hydroperoxide glutathione peroxidase of Pongo pygmaeus (Bornean orangutan).